The chain runs to 624 residues: Bifunctional 3'-phosphoadenosine 5'-phosphosulfate synthase 1 (624 aa).

Met1 carries the post-translational modification N-acetylmethionine. The adenylyl-sulfate kinase stretch occupies residues Met1–Ile225. Position 12 is an N6-acetyllysine (Lys12). Residue Gly62 to Thr67 coordinates ATP. Residues Asp89–Arg92, Phe101, Arg106–Asn109, Ile132–Ser133, Lys171, and Gly184–Phe185 contribute to the adenosine 5'-phosphosulfate site. Residues Cys207, Cys212, Gln419 to Asn422, Gly521 to Ala525, and Ala563 contribute to the ATP site. The tract at residues Val234–Ala624 is sulfate adenylyltransferase.

The protein in the N-terminal section; belongs to the APS kinase family. It in the C-terminal section; belongs to the sulfate adenylyltransferase family. As to quaternary structure, homodimer. As to expression, expressed in testis, pancreas, kidney, thymus, prostate, ovary, small intestine, colon, leukocytes and liver. Also expressed in high endothelial venules (HEV) cells and in cartilage.

The catalysed reaction is sulfate + ATP + H(+) = adenosine 5'-phosphosulfate + diphosphate. The enzyme catalyses adenosine 5'-phosphosulfate + ATP = 3'-phosphoadenylyl sulfate + ADP + H(+). It participates in sulfur metabolism; sulfate assimilation. Inhibited by chlorate. The kinase activity is subject to inhibition by the substrate adenylyl sulfate. Its function is as follows. Bifunctional enzyme with both ATP sulfurylase and APS kinase activity, which mediates two steps in the sulfate activation pathway. The first step is the transfer of a sulfate group to ATP to yield adenosine 5'-phosphosulfate (APS), and the second step is the transfer of a phosphate group from ATP to APS yielding 3'-phosphoadenylylsulfate (PAPS: activated sulfate donor used by sulfotransferase). In mammals, PAPS is the sole source of sulfate; APS appears to be only an intermediate in the sulfate-activation pathway. Required for normal biosynthesis of sulfated L-selectin ligands in endothelial cells. The protein is Bifunctional 3'-phosphoadenosine 5'-phosphosulfate synthase 1 (PAPSS1) of Homo sapiens (Human).